Consider the following 361-residue polypeptide: tRNA 2-selenouridine synthase (361 aa).

The Rhodanese domain occupies 11-134 (LIADTPLIDV…LRQTAIQATW (124 aa)). Cys94 functions as the S-selanylcysteine intermediate in the catalytic mechanism.

It belongs to the SelU family. In terms of assembly, monomer.

It catalyses the reaction 5-methylaminomethyl-2-thiouridine(34) in tRNA + selenophosphate + (2E)-geranyl diphosphate + H2O + H(+) = 5-methylaminomethyl-2-selenouridine(34) in tRNA + (2E)-thiogeraniol + phosphate + diphosphate. The enzyme catalyses 5-methylaminomethyl-2-thiouridine(34) in tRNA + (2E)-geranyl diphosphate = 5-methylaminomethyl-S-(2E)-geranyl-thiouridine(34) in tRNA + diphosphate. The catalysed reaction is 5-methylaminomethyl-S-(2E)-geranyl-thiouridine(34) in tRNA + selenophosphate + H(+) = 5-methylaminomethyl-2-(Se-phospho)selenouridine(34) in tRNA + (2E)-thiogeraniol. It carries out the reaction 5-methylaminomethyl-2-(Se-phospho)selenouridine(34) in tRNA + H2O = 5-methylaminomethyl-2-selenouridine(34) in tRNA + phosphate. Functionally, involved in the post-transcriptional modification of the uridine at the wobble position (U34) of tRNA(Lys), tRNA(Glu) and tRNA(Gln). Catalyzes the conversion of 2-thiouridine (S2U-RNA) to 2-selenouridine (Se2U-RNA). Acts in a two-step process involving geranylation of 2-thiouridine (S2U) to S-geranyl-2-thiouridine (geS2U) and subsequent selenation of the latter derivative to 2-selenouridine (Se2U) in the tRNA chain. This Salmonella arizonae (strain ATCC BAA-731 / CDC346-86 / RSK2980) protein is tRNA 2-selenouridine synthase.